Consider the following 958-residue polypeptide: MRTHTRGAPSVFFICLFCFVSACVTDENPEVMIPFTNANYDSHPMLYFSRAEVAELQLRAASSHEHIAARLTEAVNTMLSSPLEYLPPWDPKEYSARWNEIYGNNLGALAMFCVLYPENMEARDMAKDYMERMAAQPSWLVKDAPWDEVPLAHSLVGFATAYDFLYNYLSKTQQEKFLEVIANASGYMYETSYRRGWGFQYLHNHQPTNCMALLTGSLVLMNQGYLQEAYLWTKQVLTIMEKSLVLLREVTDGSLYEGVAYGSYTTRSLFQYMFLVQRHFDINHFGHPWLKQHFAFMYRTILPGFQRTVAIADSNYNWFYGPESQLVFLDKFVMRNGSGNWLADQIRRNRVVEGPGTPSKGQRWCTLHTEFLWYDASLKSVPPPDFGTPTLHYFEDWGVVTYGSALPAEINRSFLSFKSGKLGGRAIYDIVHRNKYKDWIKGWRNFNAGHEHPDQNSFTFAPNGVPFITEALYGPKYTFFNNVLMFSPAASKSCFSPWEGQVTEDCSSKWSKYKHDPAASCQGRVVAAVEKNGVVFIRGEGVGAYNPQLHLRNVQRNLILLHPQLLLLVDQIHLGEDSPLERAASFFHNVDFPFEETVVDGVHGALIRQRDGLYKMYWMDDTGYSEKGTFASVTYPRGYPYNGTNYVNVTTHLRSPVTRAAYLFIGPSIDVQSFSIHGDAQQLDVFVATSEHAYATYLWTGETAGQSAFAQVIADRQKILFDRSSAIRSSVVPEVKDYAALVEQNLQHFKPVFQLLEKQILSRVRNTASFRKTAERLLRFSDKRQTEEAIDRIFAISQQQQQQQSKSKKNRRGGKRYKFVDAVPDIFAQIEVNERKVRQKAQILAQKELPVDEDEEMKDLLDFADITYEKHKNGDVMNGRFGQARMVTTHSRAPALSASYTRLFLILNIAIFFVMLAMQLTYFQRAQSLHGQRCLYAVLLIDSCILLWLYSSCSQSQC.

The signal sequence occupies residues 1–22 (MRTHTRGAPSVFFICLFCFVSA). Over 23-902 (CVTDENPEVM…APALSASYTR (880 aa)) the chain is Lumenal. N-linked (GlcNAc...) asparagine glycosylation occurs at Asn-183. The active-site Proton donor is the His-205. Residue Tyr-261 is part of the active site. N-linked (GlcNAc...) asparagine glycosylation is found at Asn-336 and Asn-411. 2 residues coordinate Mn(2+): His-452 and Glu-470. Tyr-473 is a catalytic residue. Residue Asn-481 coordinates Mn(2+). N-linked (GlcNAc...) asparagine glycans are attached at residues Asn-642 and Asn-648. The chain crosses the membrane as a helical span at residues 903 to 923 (LFLILNIAIFFVMLAMQLTYF). The Cytoplasmic segment spans residues 924–933 (QRAQSLHGQR). Residues 934–954 (CLYAVLLIDSCILLWLYSSCS) form a helical membrane-spanning segment. Residues 955 to 958 (QSQC) lie on the Lumenal side of the membrane.

Belongs to the dermatan-sulfate isomerase family. Mn(2+) serves as cofactor. N-glycosylated. Glycosylation is important for enzymatic activity.

The protein resides in the endoplasmic reticulum membrane. It localises to the golgi apparatus membrane. Its subcellular location is the cytoplasmic vesicle membrane. It is found in the microsome membrane. The enzyme catalyses chondroitin 4'-sulfate = dermatan 4'-sulfate. The protein operates within glycan metabolism; chondroitin sulfate biosynthesis. It functions in the pathway glycan metabolism; heparan sulfate biosynthesis. Its function is as follows. Converts D-glucuronic acid to L-iduronic acid (IdoUA) residues. Plays an important role in the biosynthesis of the glycosaminoglycan/mucopolysaccharide dermatan sulfate. This is Dermatan-sulfate epimerase (DSE) from Bos taurus (Bovine).